A 284-amino-acid chain; its full sequence is 2-dehydro-3-deoxyphosphooctonate aldolase (284 aa).

The protein belongs to the KdsA family.

The protein localises to the cytoplasm. It carries out the reaction D-arabinose 5-phosphate + phosphoenolpyruvate + H2O = 3-deoxy-alpha-D-manno-2-octulosonate-8-phosphate + phosphate. Its pathway is carbohydrate biosynthesis; 3-deoxy-D-manno-octulosonate biosynthesis; 3-deoxy-D-manno-octulosonate from D-ribulose 5-phosphate: step 2/3. The protein operates within bacterial outer membrane biogenesis; lipopolysaccharide biosynthesis. The chain is 2-dehydro-3-deoxyphosphooctonate aldolase from Vibrio atlanticus (strain LGP32) (Vibrio splendidus (strain Mel32)).